The primary structure comprises 226 residues: Small ribosomal subunit protein uS2c (226 aa).

It belongs to the universal ribosomal protein uS2 family.

It is found in the plastid. The protein resides in the chloroplast. This is Small ribosomal subunit protein uS2c (rps2) from Ostreococcus tauri.